The sequence spans 735 residues: MSNRRREFIEYIDSREPVEADIDISDKADRLTDIYDSDTYGLNAMRETLPSHCYKKIREVMQTGSALDPEIADMVANGMKEWAIKQGATHYCHWFLPLNGLAAEKHDSFISIFPGDDKVLLEFSGMQLIKGEPDASSFPSGGIRSTWEARGYTVWDATSPAFIRREKNGAILCIPTAFCSWTGEALDQKTPLLRSMEYVSNESIITLSSLFNEKHKRISPTLGIEQEFFLIDRKFYLARPDLVNCGRTLIGAKPPKGQEMEDHYFGTMNSRIISCIQEVEWKMWRLGMPLKTRHNEVAPGQYEVAPIFERANIAADHNMMLMDILKNVSTKHGLVCLFHEKPFAGVNGSGKHNNWSLSTDGGSNLLEPGHTPSQNARFILFLTAIIRAVDIHADLLRASVAVPGNEHRLGANEAPPAIISIYLGKELDTVINNIINNTDIQAPGSDDMDLGVVGFPPLPKDSTDRNRTSPFAFTGNKFEFRAVGSSQVVNFPCIVLNTIVAESLRFIREEILREMKVSSRQTAFNKIIKDTLIQHVRVVFNGDGYSGDWKELAKSRGLANLPSTPEALTNINSEKNIKLFSESNILSPVELESRQEILFEIYNKSIKIEANSLYDLVSTLVLPACFAHQKNIAESVNSIMPFIQSQKSFSQPNHQYSHLSEVVESVNLLIEANQKLLALIKQTKDFNSEHSLATFLNQSVIPQMNEVRKFSDHLEGIVEDKSWPVPKYSEILFLR.

One can recognise a GS beta-grasp domain in the interval 89-183 (THYCHWFLPL…IPTAFCSWTG (95 aa)). Residues 188-621 (QKTPLLRSME…SLYDLVSTLV (434 aa)) enclose the GS catalytic domain.

The protein belongs to the glutamine synthetase family. Type 3 subfamily. Homohexamer.

The catalysed reaction is L-glutamate + NH4(+) + ATP = L-glutamine + ADP + phosphate + H(+). The sequence is that of Type-3 glutamine synthetase (glnA3) from Dictyostelium discoideum (Social amoeba).